The following is a 53-amino-acid chain: Mitochondrial sheath formation-associated protein (53 aa).

Mitochondrial intermembrane loops occupy residues 1–6 (MIVLGW) and 1–7 (MIVLGWM). 2 helical membrane passes run 7 to 23 (MLFVGLATYMGTFPEAM) and 8 to 24 (LFVGLATYMGTFPEAMP). Cytoplasmic segments lie at residues 24–53 (PPTLKWKERLPGQENKARRRIQALEEELLL) and 25–40 (PTLKWKERLPGQENKA).

In terms of assembly, interacts with VDAC3. In terms of tissue distribution, testis specific. Detected only in germ cells at the step of spermiogenesis (at protein level). Expressed during the middle steps of spermatid development. Testis specific. Detected only in germ cells at the step of spermiogenesis (at protein level). Expressed in the late steps of spermatid development.

Its subcellular location is the mitochondrion outer membrane. In terms of biological role, regulates sperm development. May be involved in mitochondrial sheath formation. This chain is Mitochondrial sheath formation-associated protein, found in Mus musculus (Mouse).